The sequence spans 380 residues: Capsular polysaccharide biosynthesis glycosyltransferase CapM (380 aa).

It belongs to the glycosyltransferase group 1 family. Glycosyltransferase 4 subfamily.

It participates in capsule biogenesis; capsule polysaccharide biosynthesis. In terms of biological role, required for the biosynthesis of type 1 capsular polysaccharide. This is Capsular polysaccharide biosynthesis glycosyltransferase CapM (capM) from Staphylococcus aureus.